We begin with the raw amino-acid sequence, 96 residues long: Large ribosomal subunit protein eL21 (96 aa).

Belongs to the eukaryotic ribosomal protein eL21 family.

The sequence is that of Large ribosomal subunit protein eL21 from Methanoregula boonei (strain DSM 21154 / JCM 14090 / 6A8).